We begin with the raw amino-acid sequence, 73 residues long: Venom protein 55.1 (73 aa).

An N-terminal signal peptide occupies residues 1–19 (MNFLCILFVVSLISSLSKC). Position 57 is a proline amide (Pro-57). The propeptide occupies 61–73 (RRSFDLYALVNAK).

Belongs to the diuretic hormone class 2 family. In terms of tissue distribution, expressed by the venom gland.

The protein localises to the secreted. Functionally, regulates fluid secretion. The polypeptide is Venom protein 55.1 (Lychas mucronatus (Chinese swimming scorpion)).